The primary structure comprises 92 residues: Small ribosomal subunit protein bS20 (92 aa).

It belongs to the bacterial ribosomal protein bS20 family.

Its function is as follows. Binds directly to 16S ribosomal RNA. The chain is Small ribosomal subunit protein bS20 from Thermosipho africanus (strain TCF52B).